The sequence spans 537 residues: Tyrosine-protein kinase Fyn (537 aa).

Gly2 carries N-myristoyl glycine lipidation. 2 S-palmitoyl cysteine lipidation sites follow: Cys3 and Cys6. At Thr12 the chain carries Phosphothreonine; by PKC. Positions 14–35 (LTEERDGSLNQSSGYRYGTDPT) are disordered. Residues Ser21 and Ser26 each carry the phosphoserine modification. The region spanning 82–143 (TGVTLFVALY…PSNYVAPVDS (62 aa)) is the SH3 domain. The SH2 domain maps to 149-246 (WYFGKLGRKD…GLCCRLVVPC (98 aa)). Residue Tyr185 is modified to Phosphotyrosine. Positions 271–524 (LQLIKRLGNG…YLQSFLEDYF (254 aa)) constitute a Protein kinase domain. Residues 277-285 (LGNGQFGEV) and Lys299 contribute to the ATP site. The active-site Proton acceptor is Asp390. Tyr420 carries the phosphotyrosine; by autocatalysis modification. Tyr531 is modified (phosphotyrosine; by CSK).

This sequence belongs to the protein kinase superfamily. Tyr protein kinase family. SRC subfamily. In terms of assembly, interacts (via its SH3 domain) with PIK3R1 and PRMT8. Interacts with FYB1, PAG1, and SH2D1A. Interacts with CD79A (tyrosine-phosphorylated form); the interaction increases FYN activity. Interacts (via SH2 domain) with CSF1R (tyrosine phosphorylated). Interacts with TOM1L1 (phosphorylated form). Interacts with KDR (tyrosine phosphorylated). Interacts (via SH3 domain) with KLHL2 (via N-terminus). Interacts with SH2D1A and SLAMF1. Interacts with ITCH; the interaction phosphorylates ITCH and negatively regulates its activity. Interacts with FASLG. Interacts with RUNX3. Interacts with KIT. Interacts with EPHA8; possible downstream effector of EPHA8 in regulation of cell adhesion. Interacts with PTK2/FAK1; this interaction leads to PTK2/FAK1 phosphorylation and activation. Interacts with CAV1; this interaction couples integrins to the Ras-ERK pathway. Interacts with UNC119. Interacts (via SH2 domain) with PTPRH (phosphorylated form). Interacts with PTPRO (phosphorylated form). Interacts with PTPRB (phosphorylated form). Interacts with FYB2. Interacts with DSCAM. Interacts with SKAP1 and FYB1; this interaction promotes the phosphorylation of CLNK. Interacts with NEDD9; in the presence of PTK2. As to quaternary structure, (Microbial infection) Interacts (via its SH3 domain) with hepatitis E virus/HEV protein ORF3. Mn(2+) is required as a cofactor. In terms of processing, autophosphorylated at Tyr-420. Phosphorylation on the C-terminal tail at Tyr-531 by CSK maintains the enzyme in an inactive state. PTPRC/CD45 dephosphorylates Tyr-531 leading to activation. Ultraviolet B (UVB) strongly increase phosphorylation at Thr-12 and kinase activity, and promotes translocation from the cytoplasm to the nucleus. Dephosphorylation at Tyr-420 by PTPN2 negatively regulates T-cell receptor signaling. Phosphorylated at tyrosine residues, which can be enhanced by NTN1. Post-translationally, palmitoylated. Palmitoylation at Cys-3 and Cys-6, probably by ZDHHC21, regulates subcellular location. As to expression, isoform 1 is highly expressed in the brain. Isoform 2 is expressed in cells of hemopoietic lineages, especially T-lymphocytes.

It is found in the cytoplasm. The protein resides in the nucleus. Its subcellular location is the cell membrane. It localises to the perikaryon. It catalyses the reaction L-tyrosyl-[protein] + ATP = O-phospho-L-tyrosyl-[protein] + ADP + H(+). Inhibited by phosphorylation of Tyr-531 by leukocyte common antigen and activated by dephosphorylation of this site. Non-receptor tyrosine-protein kinase that plays a role in many biological processes including regulation of cell growth and survival, cell adhesion, integrin-mediated signaling, cytoskeletal remodeling, cell motility, immune response and axon guidance. Inactive FYN is phosphorylated on its C-terminal tail within the catalytic domain. Following activation by PKA, the protein subsequently associates with PTK2/FAK1, allowing PTK2/FAK1 phosphorylation, activation and targeting to focal adhesions. Involved in the regulation of cell adhesion and motility through phosphorylation of CTNNB1 (beta-catenin) and CTNND1 (delta-catenin). Regulates cytoskeletal remodeling by phosphorylating several proteins including the actin regulator WAS and the microtubule-associated proteins MAP2 and MAPT. Promotes cell survival by phosphorylating AGAP2/PIKE-A and preventing its apoptotic cleavage. Participates in signal transduction pathways that regulate the integrity of the glomerular slit diaphragm (an essential part of the glomerular filter of the kidney) by phosphorylating several slit diaphragm components including NPHS1, KIRREL1 and TRPC6. Plays a role in neural processes by phosphorylating DPYSL2, a multifunctional adapter protein within the central nervous system, ARHGAP32, a regulator for Rho family GTPases implicated in various neural functions, and SNCA, a small pre-synaptic protein. Involved in reelin signaling by mediating phosphorylation of DAB1 following reelin (RELN)-binding to its receptor. Participates in the downstream signaling pathways that lead to T-cell differentiation and proliferation following T-cell receptor (TCR) stimulation. Phosphorylates PTK2B/PYK2 in response to T-cell receptor activation. Also participates in negative feedback regulation of TCR signaling through phosphorylation of PAG1, thereby promoting interaction between PAG1 and CSK and recruitment of CSK to lipid rafts. CSK maintains LCK and FYN in an inactive form. Promotes CD28-induced phosphorylation of VAV1. In mast cells, phosphorylates CLNK after activation of immunoglobulin epsilon receptor signaling. Can also promote CD244-mediated NK cell activation. The chain is Tyrosine-protein kinase Fyn (FYN) from Homo sapiens (Human).